Here is a 66-residue protein sequence, read N- to C-terminus: Cold shock-like protein CspD (66 aa).

A CSD domain is found at 4 to 63 (GKVKWFNGEKGFGFIEVEGGEDVFVHFSAIQGDGFKTLEEGQEVSFEIVDGNRGPQAANV).

In terms of assembly, homodimer.

It is found in the cytoplasm. This is Cold shock-like protein CspD (cspD) from Bacillus cereus.